A 151-amino-acid polypeptide reads, in one-letter code: Ribosome maturation factor RimP (151 aa).

This sequence belongs to the RimP family.

It is found in the cytoplasm. In terms of biological role, required for maturation of 30S ribosomal subunits. This chain is Ribosome maturation factor RimP, found in Halorhodospira halophila (strain DSM 244 / SL1) (Ectothiorhodospira halophila (strain DSM 244 / SL1)).